The sequence spans 467 residues: tRNA dimethylallyltransferase (467 aa).

Residues methionine 1–leucine 47 constitute a mitochondrion transit peptide. Threonine 32–serine 37 is a dimethylallyl diphosphate binding site. Interaction with substrate tRNA stretches follow at residues aspartate 55 to glutamine 58 and arginine 183 to arginine 187. The core aggregation region stretch occupies residues phenylalanine 221–histidine 230. The segment at glutamine 233–glutamate 255 is interaction with isopentenylpyrophosphate transferase. Interaction with substrate tRNA regions lie at residues glutamine 281–isoleucine 283 and alanine 313–asparagine 331. The Matrin-type zinc finger occupies histidine 395–lysine 425. The disordered stretch occupies residues leucine 429–valine 467. Over residues alanine 433–proline 444 the composition is skewed to polar residues. Serine 443 carries the phosphoserine modification. Residues aspartate 445–glycine 454 show a composition bias toward basic and acidic residues. A Phosphoserine modification is found at serine 455.

Belongs to the IPP transferase family.

It is found in the mitochondrion. Its subcellular location is the cytoplasm. The enzyme catalyses adenosine(37) in tRNA + dimethylallyl diphosphate = N(6)-dimethylallyladenosine(37) in tRNA + diphosphate. Catalyzes the transfer of a dimethylallyl group onto the adenine at position 37 of both cytosolic and mitochondrial tRNAs, leading to the formation of N6-(dimethylallyl)adenosine (i6A37). Mediates modification of a limited subset of tRNAs: tRNA(Ser)(AGA), tRNA(Ser)(CGA), tRNA(Ser)(UGA), as well as partial modification of the selenocysteine tRNA(Ser)(UCA). TRIT1 is therefore required for selenoprotein expression. The protein is tRNA dimethylallyltransferase (TRIT1) of Homo sapiens (Human).